Consider the following 294-residue polypeptide: MKKPFNVIAIIGKPRDQQAIQTHRDLYHWLSSLGYQVFIDDRLSAILNDVPEEHFSGLVELGEKADLAIVVGGDGNMLGAARILSRFNTRVIGVNRGNLGFLTDLNPEDFQHSLEAVLDGAYIEEERFLLEAEIHRHGQVKSHNAALNEAVLHPGQVAHMIEFEVYIDESFAFSLRADGLIVSTPTGSTAYSLSGGGPILSPSLNAISLVPMFPHTLSSRPLVVDGNRRIKLLVSPDNRGTQEVSCDGQVSLPVSPGDEIHIYQSPNRLRLIHPKDYSYYHVLRNKLGWSSKLF.

The active-site Proton acceptor is Asp-74. NAD(+)-binding positions include 74-75 (DG), 148-149 (NE), His-159, Arg-176, Asp-178, 189-194 (TAYSLS), and Gln-249.

It belongs to the NAD kinase family. A divalent metal cation is required as a cofactor.

It localises to the cytoplasm. The enzyme catalyses NAD(+) + ATP = ADP + NADP(+) + H(+). Functionally, involved in the regulation of the intracellular balance of NAD and NADP, and is a key enzyme in the biosynthesis of NADP. Catalyzes specifically the phosphorylation on 2'-hydroxyl of the adenosine moiety of NAD to yield NADP. The sequence is that of NAD kinase from Vibrio vulnificus (strain CMCP6).